The chain runs to 1399 residues: FYVE, RhoGEF and PH domain-containing protein 6 (1399 aa).

Disordered regions lie at residues 1-99, 138-164, 185-210, 235-281, 299-341, and 367-479; these read MTSA…KDVR, MKEN…SEKC, LTQQ…NGDH, AHHN…DGIS, YTSK…NGSS, and PVDE…KKPQ. Over residues 50-60 the composition is skewed to low complexity; the sequence is PAIAPKPKVPT. Residues 259-276 are compositionally biased toward basic and acidic residues; that stretch reads AESRGHTDSCEPENKRVA. Residues 307-321 show a composition bias toward basic residues; sequence KPRKTHAAARLRRQK. Polar residues-rich tracts occupy residues 332-341 and 377-402; these read EPGNSNNGSS and RALT…QQTP. Low complexity predominate over residues 403–418; that stretch reads SLDTDSSLTSDSSGSG. Over residues 428–453 the composition is skewed to polar residues; the sequence is TYTQCSTQPLSLPKQVTSACTDQPPA. Residues serine 494, serine 531, and serine 583 each carry the phosphoserine modification. The disordered stretch occupies residues 515–542; it reads RNYLHHPGPPNHGASASPFDMPNPTSEK. 2 disordered regions span residues 631-650 and 657-678; these read QHGD…GLES and TGEE…SLES. Phosphoserine is present on residues serine 670 and serine 697. Positions 768–840 are disordered; sequence APDGQLQLDP…KQDEDAGMKS (73 aa). Residues 802–817 show a composition bias toward acidic residues; the sequence is PSDEEVINSSDEDDVS. A compositionally biased stretch (basic and acidic residues) spans 821–838; the sequence is SKGEPDPLEDKQDEDAGM. The region spanning 841-1030 is the DH domain; sequence KVHHIAKEIM…IEVANHANDT (190 aa). In terms of domain architecture, PH 1 spans 1059-1153; the sequence is VFLKEGTLMK…WLEAISSSIE (95 aa). Serine 1167 carries the phosphoserine modification. Residues 1191 to 1250 form an FYVE-type zinc finger; it reads DTRATMCMICTSEFTLTWRRHHCRACGKIVCQACSSNKYGLDYLKGQLARVCEHCFQELQ. Zn(2+)-binding residues include cysteine 1197, cysteine 1200, cysteine 1213, cysteine 1216, cysteine 1221, cysteine 1224, cysteine 1242, and cysteine 1245. The 97-residue stretch at 1302–1398 folds into the PH 2 domain; the sequence is DSTMSGYLYR…WIDAFQEGTV (97 aa).

It is found in the cytoplasm. Its subcellular location is the cytoskeleton. May activate CDC42, a member of the Ras-like family of Rho- and Rac proteins, by exchanging bound GDP for free GTP. May play a role in regulating the actin cytoskeleton and cell shape. This chain is FYVE, RhoGEF and PH domain-containing protein 6 (Fgd6), found in Mus musculus (Mouse).